A 551-amino-acid polypeptide reads, in one-letter code: Cation/acetate symporter ActP (551 aa).

13 helical membrane-spanning segments follow: residues Ile-34–Ala-54, Gly-77–Val-97, Gly-104–Glu-124, Leu-150–Ala-170, Val-184–Ala-204, Trp-207–Val-227, Ile-263–Leu-283, Gly-304–Val-324, Phe-356–Leu-376, Val-406–Glu-426, Ile-430–Phe-450, Leu-469–Leu-489, and Tyr-498–Ile-518.

This sequence belongs to the sodium:solute symporter (SSF) (TC 2.A.21) family.

It is found in the cell inner membrane. In terms of biological role, transports acetate. The chain is Cation/acetate symporter ActP from Yersinia enterocolitica serotype O:8 / biotype 1B (strain NCTC 13174 / 8081).